A 672-amino-acid chain; its full sequence is MAKSDGDDPLRPASPRLRSSRRHSLRYSAYTGGPDPLAPPVDLRDALEQIGQDVMAGASPRRALSELLRRGTRNLTGADRLAAEVNRRRRELLRRNNLDGTLQEIKKLLDEAVLAERKELARALDDDARFAELQLDALPASPAKAVQELAEYRWRSGQAREKYEQIKDLLGRELLDQRFAGMKQALAGATDDDRRRVTEMLDDLNDLLDKHARGEDTQRDFDEFMTKHGEFFPENPRNVEELLDSLAKRAAAAQRFRNSLSQEQRDELDALAQQAFGSPALMRALDRLDAHLQAARPGEDWTGSQQFSGDNPFGMGEGTQALADIAELEQLAEQLSQSYPGASMDDVDLDALARQLGDQAAVDARTLAELERALVNQGFLDRGSDGQWRLSPKAMRRLGETALRDVAQQLSGRHGERDHRRAGAAGELTGATRPWQFGDTEPWHVARTLTNAVLRQAAAVHDRIRITVEDVEVAETETRTQAAVALLVDTSFSMVMENRWLPMKRTALALHHLVCTRFRSDALQIIAFGRYARTVTAAELTGLAGVYEQGTNLHHALALAGRHLRRHAGAQPVVLVVTDGEPTAHLEDFDGDGTSVFFDYPPHPRTIAHTVRGFDDMARLGAQVTIFRLGSDPGLARFIDQVARRVQGRVVVPDLDGLGAAVVGDYLRFRRR.

Residues 1–10 show a composition bias toward basic and acidic residues; it reads MAKSDGDDPL. The disordered stretch occupies residues 1–41; the sequence is MAKSDGDDPLRPASPRLRSSRRHSLRYSAYTGGPDPLAPPV.

This is an uncharacterized protein from Mycobacterium bovis (strain ATCC BAA-935 / AF2122/97).